We begin with the raw amino-acid sequence, 114 residues long: Pro-FMRFamide-related neuropeptide FF (114 aa).

An N-terminal signal peptide occupies residues 1 to 21 (MDSKWAAVLLLLLLLRNWGHA). A propeptide spanning residues 22–69 (EEAGSWGEDQVFAEEDKGPHPSQYAHTPDRIQTPGSLMRVLLQAMERP) is cleaved from the precursor. The segment at 29–51 (EDQVFAEEDKGPHPSQYAHTPDR) is disordered. Phe82 bears the Phenylalanine amide mark. Residues 85 to 100 (NAWGPWSKEQLSPQAR) constitute a propeptide that is removed on maturation. Phenylalanine amide is present on Phe111.

Belongs to the FARP (FMRFamide related peptide) family.

It localises to the secreted. Functionally, morphine modulating peptides. Have wide-ranging physiologic effects, including the modulation of morphine-induced analgesia, elevation of arterial blood pressure, and increased somatostatin secretion from the pancreas. Neuropeptide FF and SF potentiate and sensitize ASIC2 and ASIC3 channels. This is Pro-FMRFamide-related neuropeptide FF (Npff) from Rattus norvegicus (Rat).